The chain runs to 69 residues: UPF0337 protein ECA0631 (69 aa).

The protein belongs to the UPF0337 (CsbD) family.

This Pectobacterium atrosepticum (strain SCRI 1043 / ATCC BAA-672) (Erwinia carotovora subsp. atroseptica) protein is UPF0337 protein ECA0631.